An 87-amino-acid polypeptide reads, in one-letter code: Prohibitin 1 (87 aa).

Thr8 carries the post-translational modification Phosphothreonine. Residue Lys62 is modified to N6-acetyllysine. Phosphotyrosine is present on Tyr83.

This sequence belongs to the prohibitin family. In terms of assembly, the mitochondrial prohibitin complex consists of two subunits (PHB1 and PHB2), assembled into a membrane-associated ring-shaped supercomplex of approximately 1 mDa. Interacts with STOML2. Interacts with MAP1LC3B (membrane-bound form LC3-II); the interaction requires PHB2 and takes place upon Parkin-mediated mitochondrial damage. Interacts with STAT3 (unphosphorylated or phosphorylated at 'Ser-727'). Interacts with CLPB. Interacts with CD86 (via cytoplasmic domain); the interactions increases after priming with CD40.

The protein localises to the mitochondrion inner membrane. The protein resides in the nucleus. Its subcellular location is the cytoplasm. It localises to the cell membrane. Functionally, protein with pleiotropic attributes mediated in a cell-compartment- and tissue-specific manner, which include the plasma membrane-associated cell signaling functions, mitochondrial chaperone, and transcriptional co-regulator of transcription factors in the nucleus. Plays a role in adipose tissue and glucose homeostasis in a sex-specific manner. Contributes to pulmonary vascular remodeling by accelerating proliferation of pulmonary arterial smooth muscle cells. In the mitochondria, together with PHB2, forms large ring complexes (prohibitin complexes) in the inner mitochondrial membrane (IMM) and functions as a chaperone protein that stabilizes mitochondrial respiratory enzymes and maintains mitochondrial integrity in the IMM, which is required for mitochondrial morphogenesis, neuronal survival, and normal lifespan. The prohibitin complex, with DNAJC19, regulates cardiolipin remodeling and the protein turnover of OMA1 in a cardiolipin-binding manner. Regulates mitochondrial respiration activity playing a role in cellular aging. The prohibitin complex plays a role of mitophagy receptor involved in targeting mitochondria for autophagic degradation. Involved in mitochondrial-mediated antiviral innate immunity, activates RIG-I-mediated signal transduction and production of IFNB1 and proinflammatory cytokine IL6. Its function is as follows. In the nucleus, acts as a transcription coregulator, enhances promoter binding by TP53, a transcription factor it activates, but reduces the promoter binding by E2F1, a transcription factor it represses. Interacts with STAT3 to affect IL17 secretion in T-helper Th17 cells. In terms of biological role, in the plasma membrane, cooperates with CD86 to mediate CD86-signaling in B lymphocytes that regulates the level of IgG1 produced through the activation of distal signaling intermediates. Upon CD40 engagement, required to activate NF-kappa-B signaling pathway via phospholipase C and protein kinase C activation. This Mesocricetus auratus (Golden hamster) protein is Prohibitin 1 (PHB1).